Reading from the N-terminus, the 90-residue chain is Large ribosomal subunit protein uL23c (90 aa).

It belongs to the universal ribosomal protein uL23 family. As to quaternary structure, part of the 50S ribosomal subunit.

It is found in the plastid. The protein resides in the chloroplast. In terms of biological role, binds to 23S rRNA. In Oltmannsiellopsis viridis (Marine flagellate), this protein is Large ribosomal subunit protein uL23c (rpl23).